The following is a 400-amino-acid chain: Formate-dependent phosphoribosylglycinamide formyltransferase (400 aa).

Residues Glu22 to Leu23 and Glu82 contribute to the N(1)-(5-phospho-beta-D-ribosyl)glycinamide site. ATP is bound by residues Arg115, Lys157, Ser162–Gln167, Glu197–Val200, and Glu205. The ATP-grasp domain maps to Arg120–Leu315. Residues Glu274 and Glu286 each coordinate Mg(2+). N(1)-(5-phospho-beta-D-ribosyl)glycinamide contacts are provided by residues Asp293, Lys362, and Arg369–Arg370.

Belongs to the PurK/PurT family. As to quaternary structure, homodimer.

It carries out the reaction N(1)-(5-phospho-beta-D-ribosyl)glycinamide + formate + ATP = N(2)-formyl-N(1)-(5-phospho-beta-D-ribosyl)glycinamide + ADP + phosphate + H(+). The protein operates within purine metabolism; IMP biosynthesis via de novo pathway; N(2)-formyl-N(1)-(5-phospho-D-ribosyl)glycinamide from N(1)-(5-phospho-D-ribosyl)glycinamide (formate route): step 1/1. Functionally, involved in the de novo purine biosynthesis. Catalyzes the transfer of formate to 5-phospho-ribosyl-glycinamide (GAR), producing 5-phospho-ribosyl-N-formylglycinamide (FGAR). Formate is provided by PurU via hydrolysis of 10-formyl-tetrahydrofolate. The protein is Formate-dependent phosphoribosylglycinamide formyltransferase of Mycolicibacterium smegmatis (strain ATCC 700084 / mc(2)155) (Mycobacterium smegmatis).